The chain runs to 1071 residues: ATP-dependent helicase/deoxyribonuclease subunit B (1071 aa).

The protein belongs to the helicase family. AddB/RexB type 2 subfamily. In terms of assembly, heterodimer of AddA and RexB. Mg(2+) is required as a cofactor.

In terms of biological role, the heterodimer acts as both an ATP-dependent DNA helicase and an ATP-dependent, dual-direction single-stranded exonuclease. Recognizes the chi site generating a DNA molecule suitable for the initiation of homologous recombination. This subunit has 5' -&gt; 3' nuclease activity but not helicase activity. This Streptococcus pyogenes serotype M12 (strain MGAS2096) protein is ATP-dependent helicase/deoxyribonuclease subunit B.